The sequence spans 129 residues: Ribonuclease P protein component (129 aa).

This sequence belongs to the RnpA family. In terms of assembly, consists of a catalytic RNA component (M1 or rnpB) and a protein subunit.

The enzyme catalyses Endonucleolytic cleavage of RNA, removing 5'-extranucleotides from tRNA precursor.. Functionally, RNaseP catalyzes the removal of the 5'-leader sequence from pre-tRNA to produce the mature 5'-terminus. It can also cleave other RNA substrates such as 4.5S RNA. The protein component plays an auxiliary but essential role in vivo by binding to the 5'-leader sequence and broadening the substrate specificity of the ribozyme. In Corynebacterium jeikeium (strain K411), this protein is Ribonuclease P protein component.